The sequence spans 154 residues: H/ACA ribonucleoprotein complex subunit nhp2 (154 aa).

The residue at position 119 (Ser-119) is a Phosphoserine.

The protein belongs to the eukaryotic ribosomal protein eL8 family. In terms of assembly, component of the small nucleolar ribonucleoprotein particles containing H/ACA-type snoRNAs (H/ACA snoRNPs).

The protein localises to the nucleus. It is found in the nucleolus. In terms of biological role, non-catalytic component of the H/ACA small nucleolar ribonucleoprotein (H/ACA snoRNP), which catalyzes pseudouridylation of rRNA and is required for ribosome biogenesis. This involves the isomerization of uridine such that the ribose is subsequently attached to C5, instead of the normal N1. Pseudouridine ('psi') residues may serve to stabilize the conformation of rRNAs. The H/ACA snoRNP complex also mediates pseudouridylation of other types of RNAs. The H/ACA snoRNP complex mediates pseudouridylation at position 93 in U2 snRNA. Directly binds H/ACA snoRNAs. In Schizosaccharomyces pombe (strain 972 / ATCC 24843) (Fission yeast), this protein is H/ACA ribonucleoprotein complex subunit nhp2 (nhp2).